The chain runs to 448 residues: DNA repair protein RadA (448 aa).

A C4-type zinc finger spans residues 10 to 27 (CQHCGFTSPKWLGKCVQC). An ATP-binding site is contributed by 96–103 (GSPGVGKS). A RadA KNRFG motif motif is present at residues 253–257 (KNRFG). A lon-protease-like region spans residues 351–448 (DVFINVSGGI…NAVGKIVEWM (98 aa)).

Belongs to the RecA family. RadA subfamily.

Its function is as follows. DNA-dependent ATPase involved in processing of recombination intermediates, plays a role in repairing DNA breaks. Stimulates the branch migration of RecA-mediated strand transfer reactions, allowing the 3' invading strand to extend heteroduplex DNA faster. Binds ssDNA in the presence of ADP but not other nucleotides, has ATPase activity that is stimulated by ssDNA and various branched DNA structures, but inhibited by SSB. Does not have RecA's homology-searching function. This Helicobacter pylori (strain ATCC 700392 / 26695) (Campylobacter pylori) protein is DNA repair protein RadA.